A 320-amino-acid chain; its full sequence is ATP-dependent 6-phosphofructokinase (320 aa).

Gly12 provides a ligand contact to ATP. Residues 22-26 (RGVVR) and 55-60 (RYSVSD) contribute to the ADP site. ATP is bound by residues 73–74 (RF) and 103–106 (GDGS). Asp104 contributes to the Mg(2+) binding site. 126–128 (TID) provides a ligand contact to substrate. The active-site Proton acceptor is Asp128. ADP is bound at residue Arg155. Substrate-binding positions include Arg163 and 170 to 172 (MGR). ADP contacts are provided by residues 186–188 (GCE), Lys212, and 214–216 (KKH). Substrate is bound by residues Glu223, Arg244, and 250 to 253 (HIQR).

Belongs to the phosphofructokinase type A (PFKA) family. ATP-dependent PFK group I subfamily. Prokaryotic clade 'B1' sub-subfamily. As to quaternary structure, homotetramer. It depends on Mg(2+) as a cofactor.

It localises to the cytoplasm. It catalyses the reaction beta-D-fructose 6-phosphate + ATP = beta-D-fructose 1,6-bisphosphate + ADP + H(+). The protein operates within carbohydrate degradation; glycolysis; D-glyceraldehyde 3-phosphate and glycerone phosphate from D-glucose: step 3/4. With respect to regulation, allosterically activated by ADP and other diphosphonucleosides, and allosterically inhibited by phosphoenolpyruvate. Catalyzes the phosphorylation of D-fructose 6-phosphate to fructose 1,6-bisphosphate by ATP, the first committing step of glycolysis. The polypeptide is ATP-dependent 6-phosphofructokinase (Erwinia tasmaniensis (strain DSM 17950 / CFBP 7177 / CIP 109463 / NCPPB 4357 / Et1/99)).